We begin with the raw amino-acid sequence, 369 residues long: Protein-glutamate methylesterase/protein-glutamine glutaminase (369 aa).

A Response regulatory domain is found at 6-122; it reads RAVVADDSHF…SMEMSRLKDQ (117 aa). A 4-aspartylphosphate modification is found at Asp56. The disordered stretch occupies residues 136–178; it reads GATGSRSGTGSDSGTAPTTAGGSATDRRGTGGSSGQTTYVANP. Over residues 138–159 the composition is skewed to low complexity; sequence TGSRSGTGSDSGTAPTTAGGSA. A CheB-type methylesterase domain is found at 173–367; that stretch reads TYVANPTLVI…DGVIDTITTE (195 aa). Active-site residues include Ser185, His212, and Asp309.

This sequence belongs to the CheB family. Post-translationally, phosphorylated by CheA. Phosphorylation of the N-terminal regulatory domain activates the methylesterase activity.

It localises to the cytoplasm. The catalysed reaction is [protein]-L-glutamate 5-O-methyl ester + H2O = L-glutamyl-[protein] + methanol + H(+). It carries out the reaction L-glutaminyl-[protein] + H2O = L-glutamyl-[protein] + NH4(+). Functionally, involved in chemotaxis. Part of a chemotaxis signal transduction system that modulates chemotaxis in response to various stimuli. Catalyzes the demethylation of specific methylglutamate residues introduced into the chemoreceptors (methyl-accepting chemotaxis proteins or MCP) by CheR. Also mediates the irreversible deamidation of specific glutamine residues to glutamic acid. This chain is Protein-glutamate methylesterase/protein-glutamine glutaminase, found in Haloarcula marismortui (strain ATCC 43049 / DSM 3752 / JCM 8966 / VKM B-1809) (Halobacterium marismortui).